Reading from the N-terminus, the 371-residue chain is Sporulation-specific protein 2 (371 aa).

The protein localises to the spore wall. Essential for sporulation and seems to have a role at the time of, or after, initiation of nuclear division. Appears to have a role in outer spore wall formation. The sequence is that of Sporulation-specific protein 2 (SSP2) from Saccharomyces cerevisiae (strain ATCC 204508 / S288c) (Baker's yeast).